The sequence spans 489 residues: Glycogen synthase (489 aa).

ADP-alpha-D-glucose is bound at residue K18.

The protein belongs to the glycosyltransferase 1 family. Bacterial/plant glycogen synthase subfamily.

The catalysed reaction is [(1-&gt;4)-alpha-D-glucosyl](n) + ADP-alpha-D-glucose = [(1-&gt;4)-alpha-D-glucosyl](n+1) + ADP + H(+). Its pathway is glycan biosynthesis; glycogen biosynthesis. Synthesizes alpha-1,4-glucan chains using ADP-glucose. The polypeptide is Glycogen synthase (Rhodopseudomonas palustris (strain BisB18)).